We begin with the raw amino-acid sequence, 859 residues long: DNA mismatch repair protein MutS (859 aa).

An ATP-binding site is contributed by 612–619 (GPNMGGKS). Residues 797–822 (SKPLAPSATPPSSYAAPSPAAAPAQA) are disordered.

Belongs to the DNA mismatch repair MutS family.

In terms of biological role, this protein is involved in the repair of mismatches in DNA. It is possible that it carries out the mismatch recognition step. This protein has a weak ATPase activity. In Alcanivorax borkumensis (strain ATCC 700651 / DSM 11573 / NCIMB 13689 / SK2), this protein is DNA mismatch repair protein MutS.